A 364-amino-acid polypeptide reads, in one-letter code: tRNA(Met) cytidine acetate ligase (364 aa).

Residues 7–20 (IAEF…HKYL), G96, N152, and R175 each bind ATP.

Belongs to the TmcAL family.

It is found in the cytoplasm. The enzyme catalyses cytidine(34) in elongator tRNA(Met) + acetate + ATP = N(4)-acetylcytidine(34) in elongator tRNA(Met) + AMP + diphosphate. Functionally, catalyzes the formation of N(4)-acetylcytidine (ac(4)C) at the wobble position of elongator tRNA(Met), using acetate and ATP as substrates. First activates an acetate ion to form acetyladenylate (Ac-AMP) and then transfers the acetyl group to tRNA to form ac(4)C34. This Streptococcus sanguinis (strain SK36) protein is tRNA(Met) cytidine acetate ligase.